The chain runs to 123 residues: Large ribosomal subunit protein uL14 (123 aa).

This sequence belongs to the universal ribosomal protein uL14 family. In terms of assembly, part of the 50S ribosomal subunit. Forms a cluster with proteins L3 and L19. In the 70S ribosome, L14 and L19 interact and together make contacts with the 16S rRNA in bridges B5 and B8.

Functionally, binds to 23S rRNA. Forms part of two intersubunit bridges in the 70S ribosome. The chain is Large ribosomal subunit protein uL14 from Pectobacterium atrosepticum (strain SCRI 1043 / ATCC BAA-672) (Erwinia carotovora subsp. atroseptica).